Reading from the N-terminus, the 642-residue chain is Threonine--tRNA ligase (642 aa).

In terms of domain architecture, TGS spans 1 to 61; sequence MPIITLPDGS…EEDASLEIIT (61 aa). The tract at residues 244-535 is catalytic; it reads DHRKIGKQLD…LIEEYAGFFP (292 aa). The Zn(2+) site is built by cysteine 335, histidine 386, and histidine 512.

It belongs to the class-II aminoacyl-tRNA synthetase family. As to quaternary structure, homodimer. It depends on Zn(2+) as a cofactor.

The protein localises to the cytoplasm. The catalysed reaction is tRNA(Thr) + L-threonine + ATP = L-threonyl-tRNA(Thr) + AMP + diphosphate + H(+). In terms of biological role, catalyzes the attachment of threonine to tRNA(Thr) in a two-step reaction: L-threonine is first activated by ATP to form Thr-AMP and then transferred to the acceptor end of tRNA(Thr). Also edits incorrectly charged L-seryl-tRNA(Thr). This chain is Threonine--tRNA ligase, found in Vibrio vulnificus (strain CMCP6).